We begin with the raw amino-acid sequence, 296 residues long: Phosphoribosylaminoimidazole-succinocarboxamide synthase (296 aa).

It belongs to the SAICAR synthetase family.

It carries out the reaction 5-amino-1-(5-phospho-D-ribosyl)imidazole-4-carboxylate + L-aspartate + ATP = (2S)-2-[5-amino-1-(5-phospho-beta-D-ribosyl)imidazole-4-carboxamido]succinate + ADP + phosphate + 2 H(+). It functions in the pathway purine metabolism; IMP biosynthesis via de novo pathway; 5-amino-1-(5-phospho-D-ribosyl)imidazole-4-carboxamide from 5-amino-1-(5-phospho-D-ribosyl)imidazole-4-carboxylate: step 1/2. The sequence is that of Phosphoribosylaminoimidazole-succinocarboxamide synthase from Citrifermentans bemidjiense (strain ATCC BAA-1014 / DSM 16622 / JCM 12645 / Bem) (Geobacter bemidjiensis).